A 359-amino-acid chain; its full sequence is 3-dehydroquinate synthase (359 aa).

Residues 71-76 (DGEAYK), 105-109 (GVVGD), 129-130 (TT), lysine 142, and lysine 151 each bind NAD(+). Residues glutamate 184, histidine 247, and histidine 264 each coordinate Zn(2+).

It belongs to the sugar phosphate cyclases superfamily. Dehydroquinate synthase family. Co(2+) serves as cofactor. Zn(2+) is required as a cofactor. It depends on NAD(+) as a cofactor.

The protein resides in the cytoplasm. It catalyses the reaction 7-phospho-2-dehydro-3-deoxy-D-arabino-heptonate = 3-dehydroquinate + phosphate. It functions in the pathway metabolic intermediate biosynthesis; chorismate biosynthesis; chorismate from D-erythrose 4-phosphate and phosphoenolpyruvate: step 2/7. Catalyzes the conversion of 3-deoxy-D-arabino-heptulosonate 7-phosphate (DAHP) to dehydroquinate (DHQ). The chain is 3-dehydroquinate synthase from Burkholderia cenocepacia (strain HI2424).